Here is a 503-residue protein sequence, read N- to C-terminus: Na(+)-translocating NADH-quinone reductase subunit B (503 aa).

A run of 3 helical transmembrane segments spans residues 55–75, 120–142, and 160–180; these read MMLV…NSGL, IFLP…FAII, and LILP…FGVV. Thr-248 carries the post-translational modification FMN phosphoryl threonine. Helical transmembrane passes span 361–381, 384–404, 417–437, 452–472, and 475–495; these read TSTV…IASW, MLSF…MSIL, FFIP…LVFM, WLYG…NPAY, and GVML…NIAL.

The protein belongs to the NqrB/RnfD family. In terms of assembly, composed of six subunits; NqrA, NqrB, NqrC, NqrD, NqrE and NqrF. The cofactor is FMN.

Its subcellular location is the cell inner membrane. It carries out the reaction a ubiquinone + n Na(+)(in) + NADH + H(+) = a ubiquinol + n Na(+)(out) + NAD(+). Its function is as follows. NQR complex catalyzes the reduction of ubiquinone-1 to ubiquinol by two successive reactions, coupled with the transport of Na(+) ions from the cytoplasm to the periplasm. NqrA to NqrE are probably involved in the second step, the conversion of ubisemiquinone to ubiquinol. This chain is Na(+)-translocating NADH-quinone reductase subunit B, found in Chlamydia trachomatis serovar A (strain ATCC VR-571B / DSM 19440 / HAR-13).